The sequence spans 229 residues: LexA repressor (229 aa).

A DNA-binding region (H-T-H motif) is located at residues 28–48 (IREIGEALDIRSTNGVNDHLK). Residues serine 147 and lysine 184 each act as for autocatalytic cleavage activity in the active site.

The protein belongs to the peptidase S24 family. As to quaternary structure, homodimer.

It catalyses the reaction Hydrolysis of Ala-|-Gly bond in repressor LexA.. Represses a number of genes involved in the response to DNA damage (SOS response), including recA and lexA. In the presence of single-stranded DNA, RecA interacts with LexA causing an autocatalytic cleavage which disrupts the DNA-binding part of LexA, leading to derepression of the SOS regulon and eventually DNA repair. The sequence is that of LexA repressor from Anaeromyxobacter dehalogenans (strain 2CP-C).